The primary structure comprises 152 residues: Nucleoside diphosphate kinase B (152 aa).

The interaction with AKAP13 stretch occupies residues 1 to 66; it reads MANLERTFIA…DRPFFPGLVK (66 aa). ATP contacts are provided by lysine 12, phenylalanine 60, arginine 88, threonine 94, arginine 105, and asparagine 115. Catalysis depends on histidine 118, which acts as the Pros-phosphohistidine intermediate.

It belongs to the NDK family. As to quaternary structure, hexamer of two different chains: An and B (A6, A5B, A4B2, A3B3, A2B4, AB5, B6). Interacts with CAPN8. Interacts with AKAP13. Interacts with ITGB1BP1 (via C-terminal domain region). Interacts with BCL2L10. It depends on Mg(2+) as a cofactor. In terms of tissue distribution, ubiquitously expressed.

It localises to the cytoplasm. Its subcellular location is the cell projection. It is found in the lamellipodium. The protein resides in the ruffle. The protein localises to the perinuclear region. It localises to the nucleus. It carries out the reaction a 2'-deoxyribonucleoside 5'-diphosphate + ATP = a 2'-deoxyribonucleoside 5'-triphosphate + ADP. The catalysed reaction is a ribonucleoside 5'-diphosphate + ATP = a ribonucleoside 5'-triphosphate + ADP. The enzyme catalyses ATP + protein L-histidine = ADP + protein N-phospho-L-histidine.. Major role in the synthesis of nucleoside triphosphates other than ATP. The ATP gamma phosphate is transferred to the NDP beta phosphate via a ping-pong mechanism, using a phosphorylated active-site intermediate. Negatively regulates Rho activity by interacting with AKAP13/LBC. Acts as a transcriptional activator of the MYC gene; binds DNA non-specifically. Binds to both single-stranded guanine- and cytosine-rich strands within the nuclease hypersensitive element (NHE) III(1) region of the MYC gene promoter. Does not bind to duplex NHE III(1). Has G-quadruplex (G4) DNA-binding activity, which is independent of its nucleotide-binding and kinase activity. Binds both folded and unfolded G4 with similar low nanomolar affinities. Stabilizes folded G4s regardless of whether they are prefolded or not. Exhibits histidine protein kinase activity. This chain is Nucleoside diphosphate kinase B (NME2), found in Homo sapiens (Human).